The primary structure comprises 238 residues: Group 3 late-embryogenesis abundant protein, mitochondrial (238 aa).

Residues 41 to 62 (SSGSGRPADNWAESQKEKAKAG) are disordered. A coiled-coil region spans residues 50 to 202 (NWAESQKEKA…AGDLKDKAQQ (153 aa)). LEA 11-mer repeat repeat units lie at residues 64–74 (KDAQAEVGKVA), 89–99 (KDAVKQGANDL), 140–150 (KEAAENAWEKT), 151–161 (KDVAENLKDKV), 179–189 (KDRAQDAASEV), and 190–200 (KHKAGDLKDKA). Composition is skewed to basic and acidic residues over residues 182-200 (AQDA…KDKA) and 213-225 (DNRK…RRDS). Residues 182–238 (AQDAASEVKHKAGDLKDKAQQVIHDATTQSGDNRKQDQQQRRDSQGSQSGQNSRSRN) are disordered. Positions 226–238 (QGSQSGQNSRSRN) are enriched in low complexity.

The protein belongs to the LEA type 4 family.

It is found in the mitochondrion. Its function is as follows. Mitochondrial heat soluble protein acting as a molecular shield in water-deficient condition. This Hypsibius exemplaris (Freshwater tardigrade) protein is Group 3 late-embryogenesis abundant protein, mitochondrial.